Consider the following 246-residue polypeptide: Exosome complex component Rrp41 (246 aa).

Belongs to the RNase PH family. Rrp41 subfamily. In terms of assembly, component of the archaeal exosome complex. Forms a hexameric ring-like arrangement composed of 3 Rrp41-Rrp42 heterodimers. The hexameric ring associates with a trimer of Rrp4 and/or Csl4 subunits.

It is found in the cytoplasm. Its function is as follows. Catalytic component of the exosome, which is a complex involved in RNA degradation. Has 3'-&gt;5' exoribonuclease activity. Can also synthesize heteromeric RNA-tails. The protein is Exosome complex component Rrp41 of Pyrobaculum aerophilum (strain ATCC 51768 / DSM 7523 / JCM 9630 / CIP 104966 / NBRC 100827 / IM2).